We begin with the raw amino-acid sequence, 271 residues long: Glutamate racemase (271 aa).

Substrate contacts are provided by residues 12 to 13 (DS) and 44 to 45 (YG). Cysteine 75 acts as the Proton donor/acceptor in catalysis. A substrate-binding site is contributed by 76-77 (NT). Cysteine 185 functions as the Proton donor/acceptor in the catalytic mechanism. 186-187 (TH) is a binding site for substrate.

This sequence belongs to the aspartate/glutamate racemases family.

It catalyses the reaction L-glutamate = D-glutamate. The protein operates within cell wall biogenesis; peptidoglycan biosynthesis. Functionally, provides the (R)-glutamate required for cell wall biosynthesis. The chain is Glutamate racemase from Methylococcus capsulatus (strain ATCC 33009 / NCIMB 11132 / Bath).